The primary structure comprises 289 residues: Aquaporin PIP1-1 (289 aa).

The disordered stretch occupies residues 1–36; the sequence is MEGKEEDVRLGANRYSERQPIGTAAQGAGDDKDYKE. A run of 2 helical transmembrane segments spans residues 58-78 and 93-115; these read IAEFVATFLFLYITILTVMGV and IAWSFGGMIFALVYCTAGISGGH. The short motif at 117–119 is the NPA 1 element; that stretch reads NPA. Transmembrane regions (helical) follow at residues 136–156, 178–198, and 212–232; these read IFYIVMQCLGAICGAGVVKGF, GDGLGAEIVGTFILVYTVFSA, and ILAPLPIGFAVFLVHLATIPI. The NPA 2 motif lies at 238 to 240; it reads NPA. A helical transmembrane segment spans residues 260–280; that stretch reads IFWVGPFVGAALAAIYHQVII.

Belongs to the MIP/aquaporin (TC 1.A.8) family. PIP (TC 1.A.8.11) subfamily. As to expression, expressed in roots, leaves and anthers.

It is found in the cell membrane. In terms of biological role, may function as water channel to facilitate the transport of water across cell membrane. The sequence is that of Aquaporin PIP1-1 (PIP1-1) from Oryza sativa subsp. japonica (Rice).